The chain runs to 238 residues: N-methyltransferase vrtF (238 aa).

The protein belongs to the methyltransferase superfamily.

The protein operates within secondary metabolite biosynthesis; terpenoid biosynthesis. N-methyltransferase; part of the gene cluster that mediates the biosynthesis of viridicatumtoxin, a tetracycline-like fungal meroterpenoid with a unique, fused spirobicyclic ring system. The first step of the pathway is the production of the malonamoyl-CoA starter unit for the polyketide synthase vrtA. The aldolase vrtJ may be involved in the synthesis of the malonamate substrate for malonamoyl-CoA synthetase vrtB. The polyketide synthase vrtA then may utilize the malonamoyl-CoA starter unit, followed by sequential condensation of eight malonyl-CoA units to form the polyketide backbone. The cyclization of the last ring could be mediated by the lactamase-like protein vrtG. The proposed post-PKS tailoring steps are a hydroxylation at C5 catalyzed the cytochrome P450 monooxygenase vrtE, a hydroxylation at C12a catalyzed by VrtH and/or VrtI, and an O-methylation by the O-methyltransferase vrtF. VrtC is then proposed to catalyze the transfer of a geranyl group synthesized by vrtD to the aromatic C ring of the tetracyclic polyketide intermediate of viridicatumtoxin to yield previridicatumtoxin. Finally, the cytochrome P450 monooxygenase vrtK catalyzes the spirocyclization of the geranyl moiety of previridicatumtoxin to afford viridicatumtoxin. This Penicillium aethiopicum protein is N-methyltransferase vrtF.